The chain runs to 640 residues: Calpain-5 (640 aa).

A Calpain catalytic domain is found at 26–343 (LFEDPLFPAT…FTDIIKCRLI (318 aa)). Active-site residues include Cys81, His252, and Asn284. The segment at 344 to 496 (NTSYLSIHKT…VFTDVPSNCR (153 aa)) is domain III. Positions 499–617 (RLDEPPRTCW…HTLHLQDRSS (119 aa)) constitute a C2 domain.

Belongs to the peptidase C2 family.

In terms of biological role, calcium-regulated non-lysosomal thiol-protease. This Mus musculus (Mouse) protein is Calpain-5 (Capn5).